Here is a 188-residue protein sequence, read N- to C-terminus: GMP synthase [glutamine-hydrolyzing] subunit A (188 aa).

A Glutamine amidotransferase type-1 domain is found at 2–188 (KVAVIYFGGQ…FKNFIKICRK (187 aa)). C79 functions as the Nucleophile in the catalytic mechanism. Active-site residues include H166 and E168.

In terms of assembly, heterodimer composed of a glutamine amidotransferase subunit (A) and a GMP-binding subunit (B).

The enzyme catalyses XMP + L-glutamine + ATP + H2O = GMP + L-glutamate + AMP + diphosphate + 2 H(+). It participates in purine metabolism; GMP biosynthesis; GMP from XMP (L-Gln route): step 1/1. Catalyzes the synthesis of GMP from XMP. In Sulfolobus acidocaldarius (strain ATCC 33909 / DSM 639 / JCM 8929 / NBRC 15157 / NCIMB 11770), this protein is GMP synthase [glutamine-hydrolyzing] subunit A.